The primary structure comprises 704 residues: Ion-translocating oxidoreductase complex subunit C (704 aa).

4Fe-4S ferredoxin-type domains lie at M368–Y397 and K407–F436. 8 residues coordinate [4Fe-4S] cluster: C377, C380, C383, C387, C416, C419, C422, and C426. Residues R536 to A685 form a disordered region. Over residues K556–R565 the composition is skewed to low complexity.

It belongs to the 4Fe4S bacterial-type ferredoxin family. RnfC subfamily. The complex is composed of six subunits: RsxA, RsxB, RsxC, RsxD, RsxE and RsxG. Requires [4Fe-4S] cluster as cofactor.

The protein localises to the cell inner membrane. Functionally, part of a membrane-bound complex that couples electron transfer with translocation of ions across the membrane. Required to maintain the reduced state of SoxR. In Salmonella dublin (strain CT_02021853), this protein is Ion-translocating oxidoreductase complex subunit C.